The primary structure comprises 336 residues: Probable magnesium transporter NIPA2 (336 aa).

At 1-7 (MEEMSPD) the chain is on the extracellular side. Residues 8 to 28 (NIHGVILAVSSSIFIGSSFII) traverse the membrane as a helical segment. Residues 29–55 (KKKGLKKAGVSGARAGEGGYGYLYEPW) lie on the Cytoplasmic side of the membrane. A helical membrane pass occupies residues 56 to 76 (WWAGMITMIVGEIANFAAYAF). At 77–79 (APA) the chain is on the extracellular side. A helical transmembrane segment spans residues 80–100 (ILVTPLGALSIIFSAVLAHFI). Residues 101-104 (LEEK) lie on the Cytoplasmic side of the membrane. A helical transmembrane segment spans residues 105–125 (LHMFGILGCVLCVVGSTTIVL). Over 126–145 (HAPHEQGIESVKQVWHLATE) the chain is Extracellular. The chain crosses the membrane as a helical span at residues 146 to 166 (PGFLAYSAVVLVVVLALIFYY). At 167-179 (EPRYGKTHMIVYV) the chain is on the cytoplasmic side. Residues 180-200 (GICSLMGSLTVMSVKAVAIAI) traverse the membrane as a helical segment. The Extracellular portion of the chain corresponds to 201–212 (KLTFSGMNQFKY). Residues 213–233 (FHAWIFIIVVTICCILQINYL) traverse the membrane as a helical segment. Residues 234–244 (NKALDNFNTAV) lie on the Cytoplasmic side of the membrane. Residues 245–265 (ISPVYYVMFTTFTILASMIMF) traverse the membrane as a helical segment. Topologically, residues 266–272 (KDWASQS) are extracellular. A helical membrane pass occupies residues 273–293 (GLQIATELCGFVTILSGTFLL). Over 294–336 (HKTKDMGNSTSLRGSTSHSPRDTPVFINSGSSRSSNSTRPAIL) the chain is Cytoplasmic. Positions 303-336 (TSLRGSTSHSPRDTPVFINSGSSRSSNSTRPAIL) are disordered. The segment covering 321-330 (NSGSSRSSNS) has biased composition (low complexity).

The protein belongs to the NIPA (TC 2.A.7) family. Homodimer.

It is found in the cell membrane. The protein localises to the early endosome. In terms of biological role, acts as a Mg(2+) transporter. Can also transport other divalent cations such as Fe(2+), Sr(2+), Ba(2+), Mn(2+) and Co(2+) but to a much less extent than Mg(2+). The polypeptide is Probable magnesium transporter NIPA2 (Arabidopsis thaliana (Mouse-ear cress)).